Here is a 212-residue protein sequence, read N- to C-terminus: Peptide methionine sulfoxide reductase MsrA (212 aa).

The active site involves Cys52.

The protein belongs to the MsrA Met sulfoxide reductase family.

The catalysed reaction is L-methionyl-[protein] + [thioredoxin]-disulfide + H2O = L-methionyl-(S)-S-oxide-[protein] + [thioredoxin]-dithiol. It carries out the reaction [thioredoxin]-disulfide + L-methionine + H2O = L-methionine (S)-S-oxide + [thioredoxin]-dithiol. In terms of biological role, has an important function as a repair enzyme for proteins that have been inactivated by oxidation. Catalyzes the reversible oxidation-reduction of methionine sulfoxide in proteins to methionine. This Escherichia coli (strain ATCC 8739 / DSM 1576 / NBRC 3972 / NCIMB 8545 / WDCM 00012 / Crooks) protein is Peptide methionine sulfoxide reductase MsrA.